A 315-amino-acid polypeptide reads, in one-letter code: MTEQLPLALFLMGPTASGKTELAIRLRQRYPVELISVDSALIYKGMDIGTAKPDEREQQLAPHRLIDILDPTEAYSAADFRRDALAAMNEIVAQGKIPLLVGGTMLYFKALLEGLSPLPAANAEIRQQIEQEALTKGWSVLHDELQEIDPVSAARIHPNDPQRLSRALEVYRISGKTLTELTETKGESLPFRVKQFAIAPKERAELHRRIELRFDKMMEAGFEQEMRALYTRKDLHPDLPSIRCVGYRQMWDYLDGNCTLDEAIYRGICATRQLAKRQITWLRSWDNLTWLDSENIEQSLETLSEAIASDRDSCV.

13–20 contacts ATP; it reads GPTASGKT. Residue 15 to 20 coordinates substrate; that stretch reads TASGKT. 4 interaction with substrate tRNA regions span residues 38–41, 162–166, 243–248, and 276–283; these read DSAL, QRLSR, RCVGYR, and KRQITWLR.

It belongs to the IPP transferase family. In terms of assembly, monomer. The cofactor is Mg(2+).

It catalyses the reaction adenosine(37) in tRNA + dimethylallyl diphosphate = N(6)-dimethylallyladenosine(37) in tRNA + diphosphate. Functionally, catalyzes the transfer of a dimethylallyl group onto the adenine at position 37 in tRNAs that read codons beginning with uridine, leading to the formation of N6-(dimethylallyl)adenosine (i(6)A). In Vibrio vulnificus (strain CMCP6), this protein is tRNA dimethylallyltransferase.